The following is a 243-amino-acid chain: Phosphate-specific transport system accessory protein PhoU (243 aa).

It belongs to the PhoU family. Homodimer.

It localises to the cytoplasm. Its function is as follows. Part of the phosphate (Pho) regulon, which plays a key role in phosphate homeostasis. Encoded together with proteins of the phosphate-specific transport (Pst) system in the polycistronic pstSCAB-phoU operon. PhoU is essential for the repression of the Pho regulon at high phosphate conditions. In this role, it may bind, possibly as a chaperone, to PhoR, PhoB or a PhoR-PhoB complex to promote dephosphorylation of phospho-PhoB, or inhibit formation of the PhoR-PhoB transitory complex. This chain is Phosphate-specific transport system accessory protein PhoU, found in Serratia marcescens.